The sequence spans 461 residues: Glycine--tRNA ligase (461 aa).

Positions 100 and 174 each coordinate substrate. ATP is bound by residues 206–208 (RNE), 216–221 (FRTREF), 290–291 (EL), and 334–337 (GVDR). 221–225 (FEQME) lines the substrate pocket. 330 to 334 (EPSVG) is a binding site for substrate.

Belongs to the class-II aminoacyl-tRNA synthetase family. Homodimer.

It localises to the cytoplasm. It carries out the reaction tRNA(Gly) + glycine + ATP = glycyl-tRNA(Gly) + AMP + diphosphate. In terms of biological role, catalyzes the attachment of glycine to tRNA(Gly). The chain is Glycine--tRNA ligase from Caldanaerobacter subterraneus subsp. tengcongensis (strain DSM 15242 / JCM 11007 / NBRC 100824 / MB4) (Thermoanaerobacter tengcongensis).